Here is a 767-residue protein sequence, read N- to C-terminus: Integrin beta-8 (767 aa).

The signal sequence occupies residues 1–21 (MCGSALAFLTAALLSLHNCQR). Topologically, residues 22-681 (GPALVLGAAW…SECLSGPSYL (660 aa)) are extracellular. The PSI domain occupies 46 to 95 (RCGSANVVSCARCLQLGPECGWCVQEDFVSGGSGSERCDTVSSLISKGCP). Disulfide bonds link Cys47–Cys65, Cys55–Cys469, Cys58–Cys83, Cys68–Cys94, Cys211–Cys218, Cys266–Cys307, Cys407–Cys419, Cys439–Cys467, Cys471–Cys490, Cys471–Cys493, Cys481–Cys493, Cys498–Cys527, Cys510–Cys525, Cys519–Cys530, Cys532–Cys545, Cys552–Cys566, Cys560–Cys571, Cys573–Cys582, Cys584–Cys608, Cys592–Cys606, Cys600–Cys611, Cys613–Cys623, Cys626–Cys629, Cys633–Cys660, and Cys639–Cys656. In terms of domain architecture, VWFA spans 146-384 (PVDLYYLVDV…NLVVEAYKKI (239 aa)). The Mg(2+) site is built by Asp154 and Ser156. Asp193 provides a ligand contact to Ca(2+). Asn233 is a glycosylation site (N-linked (GlcNAc...) asparagine). 4 residues coordinate Ca(2+): Asn249, Asp251, Pro253, and Glu254. A Mg(2+)-binding site is contributed by Glu254. Asn402 is a glycosylation site (N-linked (GlcNAc...) asparagine). N-linked (GlcNAc...) asparagine glycans are attached at residues Asn421, Asn431, and Asn456. I-EGF domains follow at residues 471-494 (CENH…PQCD), 498-546 (CHFD…QYCE), 547-583 (KDDF…DRCQ), and 584-624 (CPSA…RLCE). The N-linked (GlcNAc...) asparagine glycan is linked to Asn647. A helical transmembrane segment spans residues 682-702 (RIFFIIFIVTFLIGLLKVLII). Over 703 to 767 (RQVILQWNNN…NAQEAFRCNF (65 aa)) the chain is Cytoplasmic.

This sequence belongs to the integrin beta chain family. Heterodimer of an alpha and a beta subunit. Beta-8 (ITGB8) associates with alpha-V (ITGAV) to form ITGAV:ITGB8. ITGAV:ITGB8 interacts with TGFB1.

Its subcellular location is the cell membrane. Integrin alpha-V:beta-8 (ITGAV:ITGB8) is a receptor for fibronectin. It recognizes the sequence R-G-D in its ligands. Integrin alpha-V:beta-6 (ITGAV:ITGB6) mediates R-G-D-dependent release of transforming growth factor beta-1 (TGF-beta-1) from regulatory Latency-associated peptide (LAP), thereby playing a key role in TGF-beta-1 activation on the surface of activated regulatory T-cells (Tregs). Required during vasculogenesis. This Mus musculus (Mouse) protein is Integrin beta-8.